A 468-amino-acid polypeptide reads, in one-letter code: MTTKSLGSFNSVISKNKIHFISLGCSRNLVDSEVMLGILLKAGYESTNEIEDADYLILNTCAFLKSARDEAKDYLDHLIDVKKENAKIIVTGCMTSNHKDELKPWMSHIHYLLGSGDVENILSAIESRESGEKISAKSYIEMGEVPRQLSTPKHYAYLKVAEGCRKRCAFCIIPSIKGKLRSKPLDQILKEFRILVNKSVKEIILIAQDLGDYGKDLSTDRSSQLESLLHELLKEPGDYWLRMLYLYPDEVSDGIIDLMQSNPKLLPYVDIPLQHINDRILKQMRRTTSREQILGFLEKLRAKVPQVYIRSSVIVGFPGETQEEFQELADFIGEGWIDNLGIFLYSQEANTPAAELPDQIPEKVKESRLKILSQIQKRNVDKHNQKLIGEKIEAVIDNYHPETNLLLTARFYGQAPEVDPCIIVNEAKLVSHFGERCFIEITGTAGYDLVGRVVKKSQNQALLKTSKA.

Positions 16 to 130 constitute an MTTase N-terminal domain; it reads NKIHFISLGC…ILSAIESRES (115 aa). [4Fe-4S] cluster contacts are provided by C25, C61, C93, C164, C168, and C171. The Radical SAM core domain occupies 150 to 382; the sequence is STPKHYAYLK…SQIQKRNVDK (233 aa). The 71-residue stretch at 385–455 folds into the TRAM domain; that stretch reads QKLIGEKIEA…GYDLVGRVVK (71 aa).

This sequence belongs to the methylthiotransferase family. RimO subfamily. [4Fe-4S] cluster is required as a cofactor.

The protein resides in the cytoplasm. It carries out the reaction L-aspartate(89)-[ribosomal protein uS12]-hydrogen + (sulfur carrier)-SH + AH2 + 2 S-adenosyl-L-methionine = 3-methylsulfanyl-L-aspartate(89)-[ribosomal protein uS12]-hydrogen + (sulfur carrier)-H + 5'-deoxyadenosine + L-methionine + A + S-adenosyl-L-homocysteine + 2 H(+). Functionally, catalyzes the methylthiolation of an aspartic acid residue of ribosomal protein uS12. The chain is Ribosomal protein uS12 methylthiotransferase RimO from Chlamydia pneumoniae (Chlamydophila pneumoniae).